Here is a 261-residue protein sequence, read N- to C-terminus: Putative hydro-lyase Sfum_3393 (261 aa).

This sequence belongs to the D-glutamate cyclase family.

In Syntrophobacter fumaroxidans (strain DSM 10017 / MPOB), this protein is Putative hydro-lyase Sfum_3393.